A 196-amino-acid polypeptide reads, in one-letter code: Probable GTP-binding protein EngB (196 aa).

Residues 24–196 (ELSEVALSGR…IWNLIEPYIS (173 aa)) form the EngB-type G domain. GTP contacts are provided by residues 32–39 (GRSNVGKS), 59–63 (GKTQT), 77–80 (DVPG), 144–147 (TKED), and 176–178 (YSS). Mg(2+) is bound by residues Ser-39 and Thr-61.

The protein belongs to the TRAFAC class TrmE-Era-EngA-EngB-Septin-like GTPase superfamily. EngB GTPase family. It depends on Mg(2+) as a cofactor.

Functionally, necessary for normal cell division and for the maintenance of normal septation. The sequence is that of Probable GTP-binding protein EngB from Staphylococcus aureus (strain MW2).